Reading from the N-terminus, the 490-residue chain is GTPase Der (490 aa).

2 EngA-type G domains span residues 3–166 and 196–369; these read PVIA…PRDD and IKIA…KSAV. Residues 9 to 16, 56 to 60, and 118 to 121 each bind GTP; these read GRPNVGKS, DTGGI, and NKVD. The disordered stretch occupies residues 162–189; the sequence is FPRDDDEPAEGEEEEVVAEGEEAKRIPG. Positions 164 to 181 are enriched in acidic residues; sequence RDDDEPAEGEEEEVVAEG. GTP is bound by residues 202-209, 249-253, and 314-317; these read GRPNVGKS, DTAGV, and NKWD. Residues 370–454 enclose the KH-like domain; that stretch reads TRWPTSRLTQ…PIRIEFKGGE (85 aa). Positions 453–490 are disordered; the sequence is GENPYEGNKNTLTDRQVNKKRRLMSHNKKASKKRRDKK. A compositionally biased stretch (basic residues) spans 470–490; that stretch reads NKKRRLMSHNKKASKKRRDKK.

It belongs to the TRAFAC class TrmE-Era-EngA-EngB-Septin-like GTPase superfamily. EngA (Der) GTPase family. As to quaternary structure, associates with the 50S ribosomal subunit.

In terms of biological role, GTPase that plays an essential role in the late steps of ribosome biogenesis. This is GTPase Der from Pseudomonas fluorescens (strain Pf0-1).